The sequence spans 224 residues: Twisted gastrulation protein homolog 1 (224 aa).

The signal sequence occupies residues 1 to 26 (MRSPCAALSASLLLLLLLLWARSSVG). Asn53, Asn82, and Asn148 each carry an N-linked (GlcNAc...) asparagine glycan.

Belongs to the twisted gastrulation protein family. Interacts with CHRD and BMP4. This interaction enhances CHRD/BMP4 complex formation. Interacts with BMP7.

It localises to the secreted. In terms of biological role, may be involved in dorsoventral axis formation. Seems to antagonize BMP signaling by forming ternary complexes with CHRD and BMPs, thereby preventing BMPs from binding to their receptors. In addition to the anti-BMP function, also has pro-BMP activity, partly mediated by cleavage and degradation of CHRD, which releases BMPs from ternary complexes. May be an important modulator of BMP-regulated cartilage development and chondrocyte differentiation. May play a role in thymocyte development. In Gallus gallus (Chicken), this protein is Twisted gastrulation protein homolog 1 (TWSG1).